Consider the following 56-residue polypeptide: Attractin (56 aa).

Cystine bridges form between Cys4–Cys41, Cys13–Cys33, and Cys20–Cys26. Asn25 is a glycosylation site (N-linked (GlcNAc...) asparagine).

In terms of tissue distribution, produced by the albumen gland of the egg cordons.

It localises to the secreted. In terms of biological role, water-borne pheromone that attract the marine mollusk Aplysia into breeding aggregations and coordinate male and female reproductive behavior within the aggregation. This Aplysia depilans (Sea hare) protein is Attractin (ATT).